A 430-amino-acid polypeptide reads, in one-letter code: Histidine--tRNA ligase (430 aa).

Belongs to the class-II aminoacyl-tRNA synthetase family. In terms of assembly, homodimer.

The protein resides in the cytoplasm. The enzyme catalyses tRNA(His) + L-histidine + ATP = L-histidyl-tRNA(His) + AMP + diphosphate + H(+). In Acinetobacter baumannii (strain AB307-0294), this protein is Histidine--tRNA ligase.